Here is a 641-residue protein sequence, read N- to C-terminus: Probable licABCH operon regulator (641 aa).

PRD domains lie at Ile184 to Gln289 and Ser296 to Glu403. 4 positions are modified to phosphohistidine; by HPr: His219, His278, His333, and His392. In terms of domain architecture, PTS EIIB type-2 spans Lys407–Asn498. Phosphocysteine; by EIIA is present on Cys413. The PTS EIIA type-2 domain occupies Arg499 to Lys638. His559 is modified (phosphohistidine; by EIIB).

The protein belongs to the transcriptional antiterminator BglG family.

The regulatory activity of LicR is modulated by phosphorylation and dephosphorylation of the various LicR domains. It becomes activated via phosphoryl group transfer from PEP, EI and HPr on the two conserved histidine residues in the PRD 2 domain, whereas phosphorylation of the EIIA-like domain on His-559 by the PTS EIIB component LicB inactivates LicR. Positive regulator of the licABCH operon. This Bacillus subtilis (strain 168) protein is Probable licABCH operon regulator (licR).